A 210-amino-acid polypeptide reads, in one-letter code: Thymidylate kinase (210 aa).

10–17 provides a ligand contact to ATP; it reads GPEGAGKS.

It belongs to the thymidylate kinase family.

The enzyme catalyses dTMP + ATP = dTDP + ADP. In terms of biological role, phosphorylation of dTMP to form dTDP in both de novo and salvage pathways of dTTP synthesis. This is Thymidylate kinase from Pseudomonas fluorescens (strain SBW25).